The primary structure comprises 146 residues: 3-dehydroquinate dehydratase (146 aa).

Tyr22 (proton acceptor) is an active-site residue. Positions 73, 79, and 86 each coordinate substrate. His99 (proton donor) is an active-site residue. Residues 100-101 (IS) and Arg110 each bind substrate.

It belongs to the type-II 3-dehydroquinase family. As to quaternary structure, homododecamer.

It catalyses the reaction 3-dehydroquinate = 3-dehydroshikimate + H2O. It functions in the pathway metabolic intermediate biosynthesis; chorismate biosynthesis; chorismate from D-erythrose 4-phosphate and phosphoenolpyruvate: step 3/7. Catalyzes a trans-dehydration via an enolate intermediate. The polypeptide is 3-dehydroquinate dehydratase (Prochlorococcus marinus (strain MIT 9515)).